Reading from the N-terminus, the 140-residue chain is Methylglyoxal synthase (140 aa).

Positions 1-140 (MKIALIAHDR…HEGDRRPLAF (140 aa)) constitute an MGS-like domain. Residues histidine 8, lysine 12, 34 to 37 (TGTT), and 54 to 55 (SG) contribute to the substrate site. Catalysis depends on aspartate 60, which acts as the Proton donor/acceptor. Histidine 87 provides a ligand contact to substrate.

This sequence belongs to the methylglyoxal synthase family.

It carries out the reaction dihydroxyacetone phosphate = methylglyoxal + phosphate. Catalyzes the formation of methylglyoxal from dihydroxyacetone phosphate. The protein is Methylglyoxal synthase of Enterococcus faecalis (strain ATCC 700802 / V583).